An 88-amino-acid chain; its full sequence is Transcription factor ILI5 (88 aa).

One can recognise a bHLH domain in the interval 1-54; that stretch reads MSSRRSSRGSISEEEINELISKLQSLLPNSRRRGSSQASTTKLLKETCNYIKSL.

The protein belongs to the bHLH protein family. As to quaternary structure, interacts with APG.

It is found in the nucleus. Its function is as follows. Atypical and probable non DNA-binding bHLH transcription factor that acts as a positive regulator of grain size. Binds the transcription repressor APG and forms a heterodimer of antagonistic basic helix-loop-helix transcription factors that regulates grain length and weight by controlling cell elongation in lemma and palea. This chain is Transcription factor ILI5 (ILI5), found in Oryza sativa subsp. indica (Rice).